Consider the following 320-residue polypeptide: tRNA dimethylallyltransferase (320 aa).

G17–T24 is an ATP binding site. T19–T24 is a substrate binding site. Residues D42–Q45 are interaction with substrate tRNA.

This sequence belongs to the IPP transferase family. In terms of assembly, monomer. Requires Mg(2+) as cofactor.

It carries out the reaction adenosine(37) in tRNA + dimethylallyl diphosphate = N(6)-dimethylallyladenosine(37) in tRNA + diphosphate. Catalyzes the transfer of a dimethylallyl group onto the adenine at position 37 in tRNAs that read codons beginning with uridine, leading to the formation of N6-(dimethylallyl)adenosine (i(6)A). This Bacillus thuringiensis (strain Al Hakam) protein is tRNA dimethylallyltransferase.